Consider the following 706-residue polypeptide: Fatty acid oxidation complex subunit alpha (706 aa).

The interval 1–188 (MEKTFSLSRR…KMGLVDDVVP (188 aa)) is enoyl-CoA hydratase. The tract at residues 308–706 (RKVAKAVVLG…AMAAEGKTFY (399 aa)) is 3-hydroxyacyl-CoA dehydrogenase.

This sequence in the N-terminal section; belongs to the enoyl-CoA hydratase/isomerase family. It in the central section; belongs to the 3-hydroxyacyl-CoA dehydrogenase family. As to quaternary structure, heterotetramer of two alpha chains (FadJ) and two beta chains (FadI).

It is found in the cytoplasm. The catalysed reaction is a (3S)-3-hydroxyacyl-CoA = a (2E)-enoyl-CoA + H2O. It carries out the reaction a 4-saturated-(3S)-3-hydroxyacyl-CoA = a (3E)-enoyl-CoA + H2O. The enzyme catalyses a (3S)-3-hydroxyacyl-CoA + NAD(+) = a 3-oxoacyl-CoA + NADH + H(+). It catalyses the reaction (3S)-3-hydroxybutanoyl-CoA = (3R)-3-hydroxybutanoyl-CoA. The protein operates within lipid metabolism; fatty acid beta-oxidation. Catalyzes the formation of a hydroxyacyl-CoA by addition of water on enoyl-CoA. Also exhibits 3-hydroxyacyl-CoA epimerase and 3-hydroxyacyl-CoA dehydrogenase activities. This Shewanella amazonensis (strain ATCC BAA-1098 / SB2B) protein is Fatty acid oxidation complex subunit alpha.